A 296-amino-acid chain; its full sequence is MYGWINLDKPCGISSASAVNLVKKILNVKKVGHAGTLDPLASGVLPIAIGEATKVMPYAVDVVKSYLFTVQWGEQRTTDDIEGKIVAKSDIVPSSEDIKKAIPNFIGLLRQVPPNFSAVHVNGVRAFKLARNGQDVSLTSRDVNVLKLKLLSADQENNKADFYLLCKKGVYVRSIARDLGIELGCLGYVRKLQRVRVGCFRKKNAITLEMLKMLYNNSRKCSYLLPLWYVLQDMKHLNDVFSDIQIKKIKNGQNIELNNLYVVRNCGICYVSTGNVPVAICSIVNSVVRPVRIFNV.

Asp-38 acts as the Nucleophile in catalysis.

This sequence belongs to the pseudouridine synthase TruB family. Type 1 subfamily.

It catalyses the reaction uridine(55) in tRNA = pseudouridine(55) in tRNA. In terms of biological role, responsible for synthesis of pseudouridine from uracil-55 in the psi GC loop of transfer RNAs. The chain is tRNA pseudouridine synthase B from Ehrlichia chaffeensis (strain ATCC CRL-10679 / Arkansas).